The following is a 151-amino-acid chain: Apolipoprotein A-I (151 aa).

The N-terminal stretch at 1-18 (MKAVVLTLAVLFLTGSQA) is a signal peptide. Positions 19 to 24 (RHFWQQ) are excised as a propeptide. Tandem repeats lie at residues 67–88 (LKLLDNWDTLGSTITKLREQIG) and 89–110 (PVTQEFWDNLEKETEVLRQEMS). The interval 67–143 (LKLLDNWDTL…EVELYRQKVA (77 aa)) is 4 X approximate tandem repeats. The residue at position 109 (methionine 109) is a Methionine sulfoxide. The stretch at 111 to 121 (KDLEEVKQKVQ) is one 3; half-length repeat. Repeat unit 4 spans residues 122–143 (PYLDDFQKKWQEEVELYRQKVA).

Belongs to the apolipoprotein A1/A4/E family. Homodimer. Interacts with APOA1BP and CLU. Component of a sperm activating protein complex (SPAP), consisting of APOA1, an immunoglobulin heavy chain, an immunoglobulin light chain and albumin. Interacts with NDRG1. Interacts with SCGB3A2. Interacts with NAXE and YJEFN3. Glycosylated. In terms of processing, palmitoylated. Post-translationally, phosphorylation sites are present in the extracellular medium. As to expression, major protein of plasma HDL, also found in chylomicrons.

The protein resides in the secreted. Functionally, participates in the reverse transport of cholesterol from tissues to the liver for excretion by promoting cholesterol efflux from tissues and by acting as a cofactor for the lecithin cholesterol acyltransferase (LCAT). As part of the SPAP complex, activates spermatozoa motility. This Panthera tigris altaica (Siberian tiger) protein is Apolipoprotein A-I (APOA1).